Here is a 225-residue protein sequence, read N- to C-terminus: Uracil-DNA glycosylase (225 aa).

The active-site Proton acceptor is the aspartate 65.

This sequence belongs to the uracil-DNA glycosylase (UDG) superfamily. UNG family.

It is found in the cytoplasm. The enzyme catalyses Hydrolyzes single-stranded DNA or mismatched double-stranded DNA and polynucleotides, releasing free uracil.. Functionally, excises uracil residues from the DNA which can arise as a result of misincorporation of dUMP residues by DNA polymerase or due to deamination of cytosine. This is Uracil-DNA glycosylase from Bacillus anthracis (strain A0248).